A 213-amino-acid polypeptide reads, in one-letter code: Eukaryotic translation initiation factor 4E (213 aa).

A phosphoserine; by CK2 mark is found at S2 and S15. Phosphothreonine is present on T22. A phosphoserine mark is found at S28 and S30. K114 is covalently cross-linked (Glycyl lysine isopeptide (Lys-Gly) (interchain with G-Cter in ubiquitin)).

It belongs to the eukaryotic initiation factor 4E family. As to quaternary structure, component of the eIF4F complex, which composition varies with external and internal environmental conditions. It is composed of at least eIF4A (TIF1/TIF2), eIF4E (TIF45) and eIF4G (TIF4631 or TIF4632). Interacts with PAT1 in a RNA-dependent manner. eIF4E is also known to interact with other partners.

The protein resides in the cytoplasm. It localises to the nucleus. Functionally, recognizes and binds the 7-methylguanosine (m7G)-containing mRNA cap during an early step in the initiation of protein synthesis and facilitates ribosome binding by inducing the unwinding of the mRNAs secondary structures. The sequence is that of Eukaryotic translation initiation factor 4E (CDC33) from Saccharomyces cerevisiae (strain ATCC 204508 / S288c) (Baker's yeast).